The following is a 446-amino-acid chain: Tubulin beta chain (446 aa).

Q11, E69, S138, G142, T143, G144, N204, and N226 together coordinate GTP. E69 serves as a coordination point for Mg(2+). Residues 427–446 (EAGVDEGEEFEEEEDFGDEQ) form a disordered region. Positions 429–446 (GVDEGEEFEEEEDFGDEQ) are enriched in acidic residues.

The protein belongs to the tubulin family. In terms of assembly, dimer of alpha and beta chains. A typical microtubule is a hollow water-filled tube with an outer diameter of 25 nm and an inner diameter of 15 nM. Alpha-beta heterodimers associate head-to-tail to form protofilaments running lengthwise along the microtubule wall with the beta-tubulin subunit facing the microtubule plus end conferring a structural polarity. Microtubules usually have 13 protofilaments but different protofilament numbers can be found in some organisms and specialized cells. Requires Mg(2+) as cofactor.

The protein resides in the cytoplasm. It is found in the cytoskeleton. Its function is as follows. Tubulin is the major constituent of microtubules, a cylinder consisting of laterally associated linear protofilaments composed of alpha- and beta-tubulin heterodimers. Microtubules grow by the addition of GTP-tubulin dimers to the microtubule end, where a stabilizing cap forms. Below the cap, tubulin dimers are in GDP-bound state, owing to GTPase activity of alpha-tubulin. The sequence is that of Tubulin beta chain from Giardia intestinalis (Giardia lamblia).